Reading from the N-terminus, the 250-residue chain is MAWQVSLLELEDRLQCPICLEVFKESLMLQCGHSYCKGCLVSLSYHLDTKVRCPMCWQVVDGSSSLPNVSLAWVIEALRLPGDPEPKVCVHHRNPLSLFCEKDQELICGLCGLLGSHQHHPVTPVSTVCSRMKEELAALFSELKQEQKKVDELIAKLVKNRTRIVNESDVFSWVIRREFQELRHPVDEEKARCLEGIGGHTRGLVASLDMQLEQAQGTRERLAQAECVLEQFGNEDHHEFIWKFHSMASR.

The RING-type zinc finger occupies 16–57 (CPICLEVFKESLMLQCGHSYCKGCLVSLSYHLDTKVRCPMCW). The segment at 84–125 (PEPKVCVHHRNPLSLFCEKDQELICGLCGLLGSHQHHPVTPV) adopts a B box-type zinc-finger fold. Positions 89, 92, 111, and 117 each coordinate Zn(2+). 2 coiled-coil regions span residues 125–169 (VSTV…NESD) and 204–235 (LVASLDMQLEQAQGTRERLAQAECVLEQFGNE).

It belongs to the TRIM/RBCC family.

The chain is Tripartite motif-containing protein 73 (TRIM73) from Homo sapiens (Human).